The primary structure comprises 186 residues: Ras-related protein rapA (186 aa).

12–19 (GSGGVGKS) contacts GTP. An Effector region motif is present at residues 34–42 (YDPTIEDSY). GTP contacts are provided by residues 59 to 63 (DTAGT) and 118 to 121 (NKCD). Residue Cys-183 is modified to Cysteine methyl ester. A lipid anchor (S-geranylgeranyl cysteine) is attached at Cys-183. Residues 184–186 (ALL) constitute a propeptide, removed in mature form.

Belongs to the small GTPase superfamily. Ras family. As to quaternary structure, interacts with ralGDS (only when rapA is in its GTP-bound state). Interacts with the Rap guanine nucleotide exchange factor glfB.

The protein resides in the cell membrane. The enzyme catalyses GTP + H2O = GDP + phosphate + H(+). G protein of the Ras family that positively regulates phagocytosis and negatively regulates macropinocytosis. May be involved in the activation of guanylyl cyclase during the response to hyperosmotic conditions. Overexpressing cells generate alterations in cell shape and contractile responses. Involved in chemotaxis via regulation of the balance of Ras and Rap signaling at the leading edge of chemotaxing cells. This Dictyostelium discoideum (Social amoeba) protein is Ras-related protein rapA (rapA).